Consider the following 190-residue polypeptide: Thioredoxin F-type, chloroplastic (190 aa).

Positions 1–31 are disordered; sequence MALHLSLSHQSWTSPAHPITSSDPTRSSVPG. The N-terminal 77 residues, 1 to 77, are a transit peptide targeting the chloroplast; the sequence is MALHLSLSHQ…SMEQALGTQE (77 aa). Polar residues predominate over residues 7–30; it reads LSHQSWTSPAHPITSSDPTRSSVP. In terms of domain architecture, Thioredoxin spans 78-189; the sequence is MEAIVGKVTE…LLEAIQAARS (112 aa). Residues Cys114 and Cys117 each act as nucleophile in the active site. The cysteines at positions 114 and 117 are disulfide-linked.

The protein belongs to the thioredoxin family. Plant F-type subfamily. As to quaternary structure, forms a complex with heterodimeric ferredoxin-thioredoxin reductase (FTR) and ferredoxin.

The protein localises to the plastid. It is found in the chloroplast. In terms of biological role, participates in various redox reactions through the reversible oxidation of the active center dithiol to a disulfide. The F form is known to activate a number of enzymes of the photosynthetic carbon cycle. The sequence is that of Thioredoxin F-type, chloroplastic from Spinacia oleracea (Spinach).